The sequence spans 253 residues: Endonuclease NucS (253 aa).

A disordered region spans residues 63 to 91 (IDDPDTDFTDGSSVGNSEEQGTDGSAHTA). Positions 71–87 (TDGSSVGNSEEQGTDGS) are enriched in polar residues.

The protein belongs to the NucS endonuclease family.

The protein localises to the cytoplasm. In terms of biological role, cleaves both 3' and 5' ssDNA extremities of branched DNA structures. The sequence is that of Endonuclease NucS from Corynebacterium kroppenstedtii (strain DSM 44385 / JCM 11950 / CIP 105744 / CCUG 35717).